A 129-amino-acid polypeptide reads, in one-letter code: Protein UL131A (129 aa).

Positions 1–18 are cleaved as a signal peptide; the sequence is MRLCRVWLSVCLCAVVLG.

As to quaternary structure, forms the envelope pentamer complex (PC) composed of gH, gL, UL128, UL130, and UL131A. The pentamer interacts with host NRP2. The interaction with gH is important for the formation of UL128, UL130, gH-gL complex.

It is found in the virion membrane. Plays a role in viral entry into host cells. Forms a pentameric complex at the surface of the viral envelope together with gH, gL, UL130 and UL131. This complex is required for entry in epithelial, endothelial and myeloid host cells. Mechanistically, engages host receptor(s) including neurophilin 2/NRP2 to mediate infection. Contributes to the formation of the complex between UL128, UL130 and gH-gL. This Human cytomegalovirus (strain Merlin) (HHV-5) protein is Protein UL131A (UL131A).